Here is a 299-residue protein sequence, read N- to C-terminus: Regucalcin (299 aa).

An a divalent metal cation-binding site is contributed by E18. Residues R101, N103, and E121 each coordinate substrate. A divalent metal cation is bound by residues N154 and D204. The active-site Proton donor/acceptor is D204.

Belongs to the SMP-30/CGR1 family. Zn(2+) serves as cofactor. Mn(2+) is required as a cofactor. The cofactor is Ca(2+). Requires Mg(2+) as cofactor. Expressed in the liver, and in the pronephros from the late tadpole stage.

The protein resides in the cytoplasm. The catalysed reaction is D-glucono-1,5-lactone + H2O = D-gluconate + H(+). It participates in cofactor biosynthesis; L-ascorbate biosynthesis via UDP-alpha-D-glucuronate pathway; L-ascorbate from UDP-alpha-D-glucuronate: step 3/4. Functionally, gluconolactonase with low activity towards other sugar lactones, including gulonolactone and galactonolactone. Catalyzes a key step in ascorbic acid (vitamin C) biosynthesis. Can also hydrolyze diisopropyl phosphorofluoridate and phenylacetate (in vitro). Calcium-binding protein. Modulates Ca(2+) signaling, and Ca(2+)-dependent cellular processes and enzyme activities. The chain is Regucalcin from Xenopus laevis (African clawed frog).